The chain runs to 300 residues: Cation-efflux pump FieF (300 aa).

4 helical membrane passes run Ala-12–Trp-32, Ile-39–Val-59, Ala-82–Ile-102, and Pro-114–Phe-134. Residues Asp-45 and Asp-49 each contribute to the Zn(2+) site. 2 residues coordinate Zn(2+): His-153 and Asp-157. 2 consecutive transmembrane segments (helical) span residues Ser-156 to His-176 and Phe-182 to Ile-202.

Belongs to the cation diffusion facilitator (CDF) transporter (TC 2.A.4) family. FieF subfamily. Homodimer.

The protein resides in the cell inner membrane. The catalysed reaction is Zn(2+)(in) + H(+)(out) = Zn(2+)(out) + H(+)(in). It carries out the reaction Cd(2+)(in) + H(+)(out) = Cd(2+)(out) + H(+)(in). It catalyses the reaction Fe(2+)(in) + H(+)(out) = Fe(2+)(out) + H(+)(in). Its function is as follows. Divalent metal cation transporter which exports Zn(2+), Cd(2+) and possibly Fe(2+). May be involved in zinc and iron detoxification by efflux. This chain is Cation-efflux pump FieF, found in Cronobacter sakazakii (strain ATCC BAA-894) (Enterobacter sakazakii).